Reading from the N-terminus, the 197-residue chain is Large ribosomal subunit protein uL13C (197 aa).

Belongs to the universal ribosomal protein uL13 family. In terms of assembly, component of the large ribosomal subunit (LSU). Mature yeast ribosomes consist of a small (40S) and a large (60S) subunit. The 40S small subunit contains 1 molecule of ribosomal RNA (18S rRNA) and at least 33 different proteins. The large 60S subunit contains 3 rRNA molecules (25S, 5.8S and 5S rRNA) and at least 46 different proteins.

It is found in the cytoplasm. The protein resides in the nucleus. The protein localises to the nucleolus. Component of the ribosome, a large ribonucleoprotein complex responsible for the synthesis of proteins in the cell. The small ribosomal subunit (SSU) binds messenger RNAs (mRNAs) and translates the encoded message by selecting cognate aminoacyl-transfer RNA (tRNA) molecules. The large subunit (LSU) contains the ribosomal catalytic site termed the peptidyl transferase center (PTC), which catalyzes the formation of peptide bonds, thereby polymerizing the amino acids delivered by tRNAs into a polypeptide chain. The nascent polypeptides leave the ribosome through a tunnel in the LSU and interact with protein factors that function in enzymatic processing, targeting, and the membrane insertion of nascent chains at the exit of the ribosomal tunnel. This chain is Large ribosomal subunit protein uL13C (rpl1603), found in Schizosaccharomyces pombe (strain 972 / ATCC 24843) (Fission yeast).